The following is a 312-amino-acid chain: Methionyl-tRNA formyltransferase (312 aa).

Position 109 to 112 (109 to 112 (SLLP)) interacts with (6S)-5,6,7,8-tetrahydrofolate.

The protein belongs to the Fmt family.

It carries out the reaction L-methionyl-tRNA(fMet) + (6R)-10-formyltetrahydrofolate = N-formyl-L-methionyl-tRNA(fMet) + (6S)-5,6,7,8-tetrahydrofolate + H(+). Attaches a formyl group to the free amino group of methionyl-tRNA(fMet). The formyl group appears to play a dual role in the initiator identity of N-formylmethionyl-tRNA by promoting its recognition by IF2 and preventing the misappropriation of this tRNA by the elongation apparatus. This is Methionyl-tRNA formyltransferase from Listeria welshimeri serovar 6b (strain ATCC 35897 / DSM 20650 / CCUG 15529 / CIP 8149 / NCTC 11857 / SLCC 5334 / V8).